An 85-amino-acid chain; its full sequence is Large ribosomal subunit protein bL31B (85 aa).

Belongs to the bacterial ribosomal protein bL31 family. Type B subfamily. As to quaternary structure, part of the 50S ribosomal subunit.

This chain is Large ribosomal subunit protein bL31B, found in Clavibacter sepedonicus (Clavibacter michiganensis subsp. sepedonicus).